A 182-amino-acid chain; its full sequence is MNTNTIKKVVATGIGAALFIIIGMLVNIPTPIPNTNIQLQYAVLALFAVIYGPGVGFFTGFIGHALKDSIQYGSPWWTWVLVSGLLGLMIGFFAKKLAIQLSGMTKKDLLLFNVVQVIANLIGWSVVAPYGDIFFYSEPASKVFAQGFLSSLVNSITIGVGGTLLLLAYAKSRPQKGSLSKD.

Helical transmembrane passes span V9–P29, A42–I62, S74–A94, L109–P129, and F148–A168.

This sequence belongs to the UPF0397 family.

The protein resides in the cell membrane. The protein is UPF0397 protein SAG1634 of Streptococcus agalactiae serotype V (strain ATCC BAA-611 / 2603 V/R).